The chain runs to 167 residues: Protein-lysine myristoyltransferase RtxC (167 aa).

Residues H20 and D89 contribute to the active site.

This sequence belongs to the RTX toxin acyltransferase family.

Its subcellular location is the cytoplasm. The catalysed reaction is tetradecanoyl-[ACP] + L-lysyl-[protein] = N(6)-tetradecanoyl-L-lysyl-[protein] + holo-[ACP] + H(+). Protein-lysine myristoyltransferase that catalyzes myristoylation of the protoxin (RtxA) at two internal lysine residues, thereby converting it to the active toxin. In Kingella kingae, this protein is Protein-lysine myristoyltransferase RtxC.